The sequence spans 693 residues: Glycine--tRNA ligase beta subunit (693 aa).

This sequence belongs to the class-II aminoacyl-tRNA synthetase family. In terms of assembly, tetramer of two alpha and two beta subunits.

The protein localises to the cytoplasm. It catalyses the reaction tRNA(Gly) + glycine + ATP = glycyl-tRNA(Gly) + AMP + diphosphate. The chain is Glycine--tRNA ligase beta subunit from Ligilactobacillus salivarius (strain UCC118) (Lactobacillus salivarius).